Consider the following 443-residue polypeptide: ATP-dependent protease ATPase subunit HslU (443 aa).

Residues Ile18 and 60–65 contribute to the ATP site; that span reads GVGKTE. Positions 138–158 are disordered; sequence PAENQWGEKEQNEDKGTRQTF. The span at 143-154 shows a compositional bias: basic and acidic residues; it reads WGEKEQNEDKGT. ATP-binding residues include Asp255, Glu321, and Arg393.

It belongs to the ClpX chaperone family. HslU subfamily. As to quaternary structure, a double ring-shaped homohexamer of HslV is capped on each side by a ring-shaped HslU homohexamer. The assembly of the HslU/HslV complex is dependent on binding of ATP.

It is found in the cytoplasm. ATPase subunit of a proteasome-like degradation complex; this subunit has chaperone activity. The binding of ATP and its subsequent hydrolysis by HslU are essential for unfolding of protein substrates subsequently hydrolyzed by HslV. HslU recognizes the N-terminal part of its protein substrates and unfolds these before they are guided to HslV for hydrolysis. The sequence is that of ATP-dependent protease ATPase subunit HslU from Pseudoalteromonas atlantica (strain T6c / ATCC BAA-1087).